We begin with the raw amino-acid sequence, 290 residues long: Arylamine N-acetyltransferase 2 (290 aa).

C68 serves as the catalytic Acyl-thioester intermediate. Residues S103 and G104 each contribute to the CoA site. A substrate-binding site is contributed by 106–107; it reads IH. Residues H107 and D122 contribute to the active site. Y208 lines the CoA pocket.

Belongs to the arylamine N-acetyltransferase family.

Its subcellular location is the cytoplasm. The enzyme catalyses an arylamine + acetyl-CoA = an N-acetylarylamine + CoA. It carries out the reaction an N-hydroxyarylamine + acetyl-CoA = an N-acetoxyarylamine + CoA. Catalyzes the N- or O-acetylation of various arylamine and heterocyclic amine substrates, and participates in the detoxification of a plethora of hydrazine and arylamine drugs. The chain is Arylamine N-acetyltransferase 2 (Nat2) from Mus musculus (Mouse).